The primary structure comprises 663 residues: Leishmanolysin-like peptidase (663 aa).

A Zn(2+)-binding site is contributed by His246. Residue Glu247 is part of the active site. Zn(2+)-binding residues include His250 and His353.

This sequence belongs to the peptidase M8 family. Requires Zn(2+) as cofactor.

Its subcellular location is the cytoplasm. In terms of biological role, metalloprotease. This Caenorhabditis briggsae protein is Leishmanolysin-like peptidase.